A 341-amino-acid chain; its full sequence is Ferredoxin--NADP reductase (341 aa).

Residues Glu-36, Gln-44, Phe-49, Val-89, Phe-123, Asp-289, and Thr-329 each contribute to the FAD site.

Belongs to the ferredoxin--NADP reductase type 2 family. In terms of assembly, homodimer. FAD serves as cofactor.

The catalysed reaction is 2 reduced [2Fe-2S]-[ferredoxin] + NADP(+) + H(+) = 2 oxidized [2Fe-2S]-[ferredoxin] + NADPH. In Ligilactobacillus salivarius (strain UCC118) (Lactobacillus salivarius), this protein is Ferredoxin--NADP reductase.